A 428-amino-acid chain; its full sequence is Probable methanogen homoaconitase large subunit (428 aa).

Cysteine 304, cysteine 364, and cysteine 367 together coordinate [4Fe-4S] cluster.

Belongs to the aconitase/IPM isomerase family. LeuC type 2 subfamily. As to quaternary structure, heterotetramer of 2 HacA and 2 HacB proteins.

It carries out the reaction (2R)-homocitrate = (2R,3S)-homoisocitrate. It catalyses the reaction (2R)-homocitrate = cis-homoaconitate + H2O. The catalysed reaction is (2R,3S)-homoisocitrate = cis-homoaconitate + H2O. The enzyme catalyses cis-(homo)2aconitate + H2O = (2R,3S)-iso(homo)2citrate. It carries out the reaction cis-(homo)3aconitate + H2O = (2R,3S)-iso(homo)3citrate. It participates in organic acid metabolism; 2-oxosuberate biosynthesis. Functionally, component of a hydro-lyase with broad substrate specificity for cis-unsaturated tricarboxylic acids. Catalyzes both the reversible dehydration of (R)-homocitrate ((R)-2-hydroxybutane-1,2,4-tricarboxylate) to produce cis-homoaconitate ((Z)-but-1-ene-1,2,4-tricarboxylate), and its hydration to homoisocitrate ((1R,2S)-1-hydroxybutane-1,2,4-tricarboxylate). Is also able to hydrate the analogous longer chain substrates cis-homo(2)-aconitate, cis-homo(3)-aconitate. These reactions are part of the biosynthesis pathway of coenzyme B. The sequence is that of Probable methanogen homoaconitase large subunit (hacA) from Methanothermobacter thermautotrophicus (strain ATCC 29096 / DSM 1053 / JCM 10044 / NBRC 100330 / Delta H) (Methanobacterium thermoautotrophicum).